Consider the following 486-residue polypeptide: Hydrogenobyrinate a,c-diamide synthase (486 aa).

Pro residues predominate over residues Ser254–Leu272. Positions Ser254 to Asp284 are disordered. Residues Arg289 to Gly474 form the GATase cobBQ-type domain. Cys372 acts as the Nucleophile in catalysis.

The protein belongs to the CobB/CbiA family. Requires Mg(2+) as cofactor.

It carries out the reaction hydrogenobyrinate + 2 L-glutamine + 2 ATP + 2 H2O = hydrogenobyrinate a,c-diamide + 2 L-glutamate + 2 ADP + 2 phosphate + 2 H(+). Its pathway is cofactor biosynthesis; adenosylcobalamin biosynthesis; cob(II)yrinate a,c-diamide from precorrin-2 (aerobic route): step 9/10. Functionally, catalyzes the ATP-dependent amidation of the two carboxylate groups at positions a and c of hydrogenobyrinate, using either L-glutamine or ammonia as the nitrogen source. This is Hydrogenobyrinate a,c-diamide synthase from Streptomyces coelicolor (strain ATCC BAA-471 / A3(2) / M145).